The sequence spans 355 residues: DNA polymerase IV (355 aa).

In terms of domain architecture, UmuC spans Ile-7–Gly-188. Positions 11 and 106 each coordinate Mg(2+). Glu-107 is a catalytic residue.

It belongs to the DNA polymerase type-Y family. As to quaternary structure, monomer. Requires Mg(2+) as cofactor.

It localises to the cytoplasm. The catalysed reaction is DNA(n) + a 2'-deoxyribonucleoside 5'-triphosphate = DNA(n+1) + diphosphate. Functionally, poorly processive, error-prone DNA polymerase involved in untargeted mutagenesis. Copies undamaged DNA at stalled replication forks, which arise in vivo from mismatched or misaligned primer ends. These misaligned primers can be extended by PolIV. Exhibits no 3'-5' exonuclease (proofreading) activity. May be involved in translesional synthesis, in conjunction with the beta clamp from PolIII. The protein is DNA polymerase IV of Legionella pneumophila (strain Corby).